The chain runs to 487 residues: Betaine aldehyde dehydrogenase (487 aa).

K(+) is bound by residues I27 and D93. 149 to 151 (GAW) is a binding site for NAD(+). Catalysis depends on K161, which acts as the Charge relay system. NAD(+) contacts are provided by residues 175–178 (KPSE) and 228–231 (SVPT). E249 functions as the Proton acceptor in the catalytic mechanism. 3 residues coordinate NAD(+): G251, C283, and E384. C283 serves as the catalytic Nucleophile. A Cysteine sulfenic acid (-SOH) modification is found at C283. The K(+) site is built by K454 and G457. The active-site Charge relay system is E461.

Belongs to the aldehyde dehydrogenase family. Dimer of dimers. Requires K(+) as cofactor.

It catalyses the reaction betaine aldehyde + NAD(+) + H2O = glycine betaine + NADH + 2 H(+). It functions in the pathway amine and polyamine biosynthesis; betaine biosynthesis via choline pathway; betaine from betaine aldehyde: step 1/1. In terms of biological role, involved in the biosynthesis of the osmoprotectant glycine betaine. Catalyzes the irreversible oxidation of betaine aldehyde to the corresponding acid. This Mesorhizobium japonicum (strain LMG 29417 / CECT 9101 / MAFF 303099) (Mesorhizobium loti (strain MAFF 303099)) protein is Betaine aldehyde dehydrogenase.